The chain runs to 299 residues: Superkiller complex protein 8 (299 aa).

WD repeat units lie at residues 11 to 48, 54 to 93, 96 to 135, 138 to 177, 180 to 219, 223 to 263, and 266 to 299; these read AHED…FLTE, KHIL…LHKT, SGPL…KLRS, NTNK…RVSE, AHGV…PYIA, GHSS…LDSS, and AHAD…ALKQ.

The protein belongs to the SKI8 family.

The polypeptide is Superkiller complex protein 8 (skic8) (Dictyostelium discoideum (Social amoeba)).